A 391-amino-acid chain; its full sequence is Coproporphyrin III ferrochelatase (391 aa).

Fe-coproporphyrin III is bound by residues Ser79 and Tyr148. Fe(2+) contacts are provided by His211 and Glu305.

It belongs to the ferrochelatase family.

The protein localises to the cytoplasm. The catalysed reaction is Fe-coproporphyrin III + 2 H(+) = coproporphyrin III + Fe(2+). Its pathway is porphyrin-containing compound metabolism; protoheme biosynthesis. Its function is as follows. Involved in coproporphyrin-dependent heme b biosynthesis. Catalyzes the insertion of ferrous iron into coproporphyrin III to form Fe-coproporphyrin III. This chain is Coproporphyrin III ferrochelatase, found in Tropheryma whipplei (strain TW08/27) (Whipple's bacillus).